Reading from the N-terminus, the 240-residue chain is tRNA1(Val) (adenine(37)-N6)-methyltransferase (240 aa).

It belongs to the methyltransferase superfamily. tRNA (adenine-N(6)-)-methyltransferase family.

The protein resides in the cytoplasm. It carries out the reaction adenosine(37) in tRNA1(Val) + S-adenosyl-L-methionine = N(6)-methyladenosine(37) in tRNA1(Val) + S-adenosyl-L-homocysteine + H(+). In terms of biological role, specifically methylates the adenine in position 37 of tRNA(1)(Val) (anticodon cmo5UAC). The polypeptide is tRNA1(Val) (adenine(37)-N6)-methyltransferase (Christiangramia forsetii (strain DSM 17595 / CGMCC 1.15422 / KT0803) (Gramella forsetii)).